Here is a 407-residue protein sequence, read N- to C-terminus: MTGRVCVLVMDSFGIGASLDAARYGDVGANTLVHIYEACKRGECDIDGVRKGSLMLPNLASKGLYHAAMASSGLPFIDLSALAIPSGYYGYAVEQSLGKDTPSGHWEMAGVPVTFEWGYFPDKPYCFPEELISEFIKQCNLPGVLGEKHASGTIIIDELGEEHIRTGKPIVYTSADSVFQIAAHEEAFGLQRLYDICKIARNLVDKYQIGRVIARPFAGKPGSFKRTGNRKDYATPPPEKTLLDFLKEDGREVIAIGKIADIYAHQGVTQEIKADGNMALFDATLSAMKTAPQGSLVFTNFVDFDSSYGHRRDVAGYAHALEQFDARLPELEVLLQPNDMVFIAADHGCDPTFPGSDHTREHIPVLMFGPQVNSKFIGRRDCFADIGQSIAEHLQLSSPLAHGVSFL.

Mn(2+)-binding residues include Asp11, Asp305, His310, Asp346, His347, and His358.

Belongs to the phosphopentomutase family. It depends on Mn(2+) as a cofactor.

The protein resides in the cytoplasm. It carries out the reaction 2-deoxy-alpha-D-ribose 1-phosphate = 2-deoxy-D-ribose 5-phosphate. The enzyme catalyses alpha-D-ribose 1-phosphate = D-ribose 5-phosphate. The protein operates within carbohydrate degradation; 2-deoxy-D-ribose 1-phosphate degradation; D-glyceraldehyde 3-phosphate and acetaldehyde from 2-deoxy-alpha-D-ribose 1-phosphate: step 1/2. In terms of biological role, isomerase that catalyzes the conversion of deoxy-ribose 1-phosphate (dRib-1-P) and ribose 1-phosphate (Rib-1-P) to deoxy-ribose 5-phosphate (dRib-5-P) and ribose 5-phosphate (Rib-5-P), respectively. This Legionella pneumophila (strain Corby) protein is Phosphopentomutase.